The following is a 159-amino-acid chain: Vesicle transport protein SFT2A (159 aa).

Topologically, residues 1-36 (MEKLRRVLSGQDDEEQGLTAQVLDASSLSFNTRLKW) are cytoplasmic. A Phosphoserine modification is found at Ser-9. A helical membrane pass occupies residues 37-57 (FVICFVAGIFFSFLGTGLLWL). Over 58-62 (PNGMK) the chain is Lumenal. A helical membrane pass occupies residues 63-83 (LFAVFYTLGNLAALASTCFLM). Residues 84–97 (GPVKQLKKMFETTR) are Cytoplasmic-facing. The helical transmembrane segment at 98-118 (LLATIIMLLCLVFTLCAALWW) threads the bilayer. Over 119-122 (RKKG) the chain is Lumenal. The helical transmembrane segment at 123–143 (LALLFCILQFLSMTWYSLSYI) threads the bilayer. Residues 144–159 (PYARDAVLKCCSSLLG) are Cytoplasmic-facing.

Belongs to the SFT2 family.

It localises to the membrane. May be involved in fusion of retrograde transport vesicles derived from an endocytic compartment with the Golgi complex. The sequence is that of Vesicle transport protein SFT2A from Mus musculus (Mouse).